The chain runs to 602 residues: Carbon catabolite repressor protein 4 homolog 1 (602 aa).

The disordered stretch occupies residues alanine 113–glycine 136. Glutamate 299 lines the Mg(2+) pocket.

Belongs to the CCR4/nocturin family. As to quaternary structure, component of the CCR4-NOT complex, at least composed of CRR4 and CAF1 proteins. It depends on Mg(2+) as a cofactor.

It localises to the nucleus. Its subcellular location is the cytoplasm. The catalysed reaction is Exonucleolytic cleavage of poly(A) to 5'-AMP.. Acts as a catalytic component of the CCR4-NOT core complex, which in the nucleus seems to be a general transcription factor, and in the cytoplasm the major mRNA deadenylase involved in mRNA turnover. In Arabidopsis thaliana (Mouse-ear cress), this protein is Carbon catabolite repressor protein 4 homolog 1 (CCR4-1).